Consider the following 67-residue polypeptide: Large ribosomal subunit protein bL35 (67 aa).

A disordered region spans residues 1-20 (MPKLKTKSGAKKRFVPKKSG).

Belongs to the bacterial ribosomal protein bL35 family.

The chain is Large ribosomal subunit protein bL35 from Anaeromyxobacter dehalogenans (strain 2CP-C).